The primary structure comprises 177 residues: Small ribosomal subunit protein mS23 (177 aa).

Alanine 2 carries the post-translational modification N-acetylalanine. Residue lysine 83 is modified to N6-succinyllysine. Lysine 102 carries the post-translational modification N6-acetyllysine. Positions 145 to 177 are disordered; sequence LQASSEGHEPQEDDDLAQRGQVKQEPETAPSPP.

Belongs to the mitochondrion-specific ribosomal protein mS23 family. In terms of assembly, component of the mitochondrial ribosome small subunit (28S) which comprises a 12S rRNA and about 30 distinct proteins.

The protein localises to the mitochondrion. In Mus musculus (Mouse), this protein is Small ribosomal subunit protein mS23.